Consider the following 334-residue polypeptide: Leukocyte cell-derived chemotaxin 1 (334 aa).

Residues 45 to 65 traverse the membrane as a helical segment; that stretch reads VVLISGAVLLLFGAIGAFYFW. A BRICHOS domain is found at 104-201; it reads GSGAEEAIAV…LCGDLPIFWL (98 aa). An intrachain disulfide couples C131 to C193. Residues 211–214 constitute a propeptide that is removed on maturation; the sequence is RERR. The disordered stretch occupies residues 218-268; the sequence is RKIVPTTTKRPHSGPRSNPGAGRLNNETRPSVQEDSQAFNPDNPYHQQEGE. Positions 242–257 are enriched in polar residues; it reads NNETRPSVQEDSQAFN. Residue N243 is glycosylated (N-linked (GlcNAc...) asparagine). 4 disulfide bridges follow: C282–C286, C283–C323, C293–C317, and C297–C313.

The protein belongs to the chondromodulin-1 family. After cleavage, the post-translationally modified ChM-I is secreted as a glycoprotein. Detected in cartilage and cardiac valves (at protein level). Detected in the laminae fibrosa, spongiosa and ventricularis layers of normal cardiac valves (at protein level). Expression is decreased cardiac valves of patients with valvular heart disease (at protein level). Weakly expressed in chondrosarcoma.

It localises to the secreted. Its subcellular location is the extracellular space. The protein localises to the extracellular matrix. It is found in the endomembrane system. Bifunctional growth regulator that stimulates the growth of cultured chondrocytes in the presence of basic fibroblast growth factor (FGF) but inhibits the growth of cultured vascular endothelial cells. May contribute to the rapid growth of cartilage and vascular invasion prior to the replacement of cartilage by bone during endochondral bone development. Inhibits in vitro tube formation and mobilization of endothelial cells. Plays a role as antiangiogenic factor in cardiac valves to suppress neovascularization. The protein is Leukocyte cell-derived chemotaxin 1 of Homo sapiens (Human).